The sequence spans 467 residues: Ethanolamine ammonia-lyase reactivase EutA (467 aa).

Belongs to the EutA family.

The protein localises to the bacterial microcompartment. It participates in amine and polyamine degradation; ethanolamine degradation. Reactivates suicidally inhibited ethanolamine ammonia-lyase (EAL), cyanocobalamin-inactivated EAL and O(2)-inactivated EAL; requires Mg(2+), ATP and adenosylcobalamin. Reactivation probably occurs by the ATP-dependent exchange of cobalamin. Protects EAL from inhibition by CN-B12, does not have adenosylation activity. Functionally, expression of the eut operon allows this bacteria to use ethanolamine as a carbon, nitrogen and energy source. It relies on cobalamin (vitamin B12) both as a cofactor for the ethanolamine ammonia-lyase (EAL) activity and to induce the operon. EA enhances bacterial survival in macrophages in a concentration-dependent manner, suggesting it is an important nutrient during infection. The sequence is that of Ethanolamine ammonia-lyase reactivase EutA from Salmonella typhimurium (strain LT2 / SGSC1412 / ATCC 700720).